A 701-amino-acid chain; its full sequence is MTSHGRKVVRVVARVKPSTDLASTKSISVQKPMGDDSETVTISFGAQFAGSKDSYRLDYCYEENETTGSILTKEIKPLISTVFEGKDANVIAHGARNSGKTHLIQGNERELGLAVLTMSEMLSMAEERGDAIFVSVYEVSQETVYDLLDQEKRVVSVLEGAQGKIQLKGLSQVPVKSLSEFQNLYFGFKKSQKLTSDLPTRSHKGVMIHVTTGNANSGSLGRMNFLDMAGYEDSRKQNSALGPLEIARVNKSIYALQNVMYALNANESHVPYRESKLTRMLKDCLKGSNITLLITCLPREFSQDSFYMLNLASRICLGGNRAITNPTKKKINGLDRSVSLSSAAQRRQTPLTMSAASRKQTVLRGNVTERKTKINTATSAIKARKLFGEANDSVKCKNSSKKVEGKAKMVLKKGISTSKVVLSVQASSPKEEICSSITVTDFQSSLVEEEYSLAFSSSTVAMEPGYSNGASLSSEAIYTTDKETPRKQEEMFAGATHCDDAFVDKAQIVERDENNSVIEEDLTLVIDEGENLDKENNSLLANETASPPLSMRLQELSNNLKSICKFSNQLSVPEKHQTPLTILQAEEASEHSDITAEAAVSIELRTPEKTMPSNIGCSPWKTYSAHSSKLKNSAVGEYLKFINTAGKEDLKKLKGIGDKRAAYIVELREESPFKTLDDLQSIGLSAKQVNGLLKKEIGEIF.

Residues 8–318 (VVRVVARVKP…LNLASRICLG (311 aa)) enclose the Kinesin motor domain. Position 94-101 (94-101 (GARNSGKT)) interacts with ATP.

Belongs to the TRAFAC class myosin-kinesin ATPase superfamily. Kinesin family. KIN-10 subfamily.

This is Kinesin-like protein KIN-10C from Arabidopsis thaliana (Mouse-ear cress).